A 310-amino-acid chain; its full sequence is uncharacterized protein (310 aa).

This is an uncharacterized protein from Methanocaldococcus jannaschii (strain ATCC 43067 / DSM 2661 / JAL-1 / JCM 10045 / NBRC 100440) (Methanococcus jannaschii).